Consider the following 501-residue polypeptide: MNQAILQLSEIEKAFPGVKALDKASLNVYPGRVMALMGENGAGKSTLMKVLTGIYSRDAGEIVYQGQPAQFKGPRDSQQAGISIIHQELNLIRELTIAENIFLGREITSAFGRIDWPQMYAEADKLLARLKVKHSSKTLLGQLSLGEQQMVEIAKALSFESKVIIMDEPTDALTDTETEALFSVIRELREQGCGIVYISHRLKEIFEICDDITVLRDGKFIGQCEVVQTDEDGLIEMMVGRKLEEQYPRIDVVHGQTCLEVIGLTGSGVHDVSFTLKRGEILGISGLMGAGRTELMKVIYGALPSERGVINLDNRTINPVSPQDGLANGIAYISEDRKGDGLVLGLSVKENMSLCALDKLSKGVQIQHQDEVVAVDDFIQLFNIKTPSREQIIGNLSGGNQQKVAIAKGLMTKPKVLILDEPTRGVDVGAKKEIYQLINKFKAEGMSIILVSSEMPEVLGMSDRILVMHEGRITGEFEAKHADQEKLMACAVGKKVSEEAA.

2 consecutive ABC transporter domains span residues 6-242 and 253-495; these read LQLS…VGRK and VHGQ…VGKK. ATP is bound at residue 38 to 45; the sequence is GENGAGKS.

The protein belongs to the ABC transporter superfamily. Ribose importer (TC 3.A.1.2.1) family. As to quaternary structure, the complex is composed of an ATP-binding protein (RbsA), two transmembrane proteins (RbsC) and a solute-binding protein (RbsB).

It is found in the cell inner membrane. The enzyme catalyses D-ribose(out) + ATP + H2O = D-ribose(in) + ADP + phosphate + H(+). Functionally, part of the ABC transporter complex RbsABC involved in ribose import. Responsible for energy coupling to the transport system. The chain is Ribose import ATP-binding protein RbsA from Vibrio vulnificus (strain YJ016).